We begin with the raw amino-acid sequence, 37 residues long: Potassium channel toxin alpha-KTx 11.2 (37 aa).

3 cysteine pairs are disulfide-bonded: Cys-8/Cys-27, Cys-13/Cys-33, and Cys-17/Cys-35.

It belongs to the short scorpion toxin superfamily. Potassium channel inhibitor family. Alpha-KTx 11 subfamily. Expressed by the venom gland.

It localises to the secreted. Binds and inhibits voltage-sensitive potassium channels. Inhibits the vertebrate potassium channel Kv1.1/KCNA1 with low affinity. This chain is Potassium channel toxin alpha-KTx 11.2, found in Parabuthus villosus (Black hairy thick-tailed scorpion).